The following is a 171-amino-acid chain: dCTP pyrophosphatase (171 aa).

The catalysed reaction is dCTP + H2O = dCMP + diphosphate + H(+). This Enterobacteria phage T4 (Bacteriophage T4) protein is dCTP pyrophosphatase (56).